The following is a 180-amino-acid chain: Large ribosomal subunit protein uL6 (180 aa).

It belongs to the universal ribosomal protein uL6 family. As to quaternary structure, part of the 50S ribosomal subunit.

Functionally, this protein binds to the 23S rRNA, and is important in its secondary structure. It is located near the subunit interface in the base of the L7/L12 stalk, and near the tRNA binding site of the peptidyltransferase center. This is Large ribosomal subunit protein uL6 from Clostridium tetani (strain Massachusetts / E88).